We begin with the raw amino-acid sequence, 296 residues long: Cell division protein DivIB (296 aa).

Over 1-29 the chain is Cytoplasmic; sequence MTKEIPKINNEYLKEKRKKQRIQQRRVQR. The chain crosses the membrane as a helical span at residues 30–50; sequence MIVGILVVIVLLILVYMFTPI. Residues 51-119 form the POTRA domain; sequence SHIKSADIKG…NPIEVNVKEH (69 aa). Residues 51-296 are Extracellular-facing; that stretch reads SHIKSADIKG…NKIKDEESSE (246 aa). Positions 256-273 are enriched in polar residues; that stretch reads NNGQTSSASAKEVQSGTA. The disordered stretch occupies residues 256-296; it reads NNGQTSSASAKEVQSGTASEDKAKDDLQKALNKIKDEESSE. A compositionally biased stretch (basic and acidic residues) spans 274-296; the sequence is SEDKAKDDLQKALNKIKDEESSE.

This sequence belongs to the FtsQ/DivIB family. DivIB subfamily.

The protein localises to the cell membrane. Functionally, cell division protein that may be involved in stabilizing or promoting the assembly of the division complex. This chain is Cell division protein DivIB, found in Staphylococcus pseudintermedius (strain HKU10-03).